The sequence spans 272 residues: Bifunctional protein FolD (272 aa).

NADP(+) is bound by residues 155–157, Ser182, and Ile223; that span reads GRS.

This sequence belongs to the tetrahydrofolate dehydrogenase/cyclohydrolase family. As to quaternary structure, homodimer.

It catalyses the reaction (6R)-5,10-methylene-5,6,7,8-tetrahydrofolate + NADP(+) = (6R)-5,10-methenyltetrahydrofolate + NADPH. It carries out the reaction (6R)-5,10-methenyltetrahydrofolate + H2O = (6R)-10-formyltetrahydrofolate + H(+). The protein operates within one-carbon metabolism; tetrahydrofolate interconversion. Catalyzes the oxidation of 5,10-methylenetetrahydrofolate to 5,10-methenyltetrahydrofolate and then the hydrolysis of 5,10-methenyltetrahydrofolate to 10-formyltetrahydrofolate. The polypeptide is Bifunctional protein FolD (Fervidobacterium nodosum (strain ATCC 35602 / DSM 5306 / Rt17-B1)).